The primary structure comprises 139 residues: Histone H2AX (139 aa).

Disordered regions lie at residues 1 to 21 (MSGR…RSSR) and 119 to 139 (KKSS…SQEY). The residue at position 2 (Ser2) is an N-acetylserine. Position 2 is a phosphoserine (Ser2). Positions 7 to 19 (AVSKTRAKAKTRS) are enriched in basic residues. Lys10 is subject to N6-lactoyllysine; alternate. Residues Lys14, Lys16, and Lys120 each participate in a glycyl lysine isopeptide (Lys-Gly) (interchain with G-Cter in ubiquitin) cross-link. Ser136 is subject to Phosphoserine. The [ST]-Q motif motif lies at 136–137 (SQ). A Phosphotyrosine; by WSTF modification is found at Tyr139.

This sequence belongs to the histone H2A family. As to quaternary structure, the nucleosome is a histone octamer containing two molecules each of H2A, H2B, H3 and H4 assembled in one H3-H4 heterotetramer and two H2A-H2B heterodimers. The octamer wraps approximately 147 bp of DNA. Interacts with numerous proteins required for DNA damage signaling and repair when phosphorylated on Ser-136. Post-translationally, phosphorylated. Phosphorylation of Ser-136 (H2AX139ph) occurs in response to DNA double strand breaks (DSBs) generated by exogenous genotoxic agents, by stalled replication forks and by meiotic recombination events. Phosphorylation is dependent on the DNA damage checkpoint kinases ATR and ATM, spreads on either side of a detected DSB site and may mark the surrounding chromatin for recruitment of proteins required for DNA damage signaling and repair. Widespread phosphorylation may also serve to amplify the damage signal or aid repair of persistent lesions. Dephosphorylation of Ser-136 is required for DNA DSB repair. Phosphorylation at Tyr-139 (H2AXY142ph) by baz1b/wstf determines the relative recruitment of either DNA repair or pro-apoptotic factors. Phosphorylation at Tyr-139 (H2AXY142ph) favors the recruitment of pro-apoptosis factors. In contrast, dephosphorylation of Tyr-139 by EYA proteins (eya1, eya2, eya3 or eya4) favors the recruitment of MDC1-containing DNA repair complexes to the tail of phosphorylated Ser-136 (H2AX139ph). Phosphorylated by VRK1. In terms of processing, monoubiquitination of Lys-120 (H2AXK119ub) by ring1 and rnf2/ring2 complex gives a specific tag for epigenetic transcriptional repression. Following DNA double-strand breaks (DSBs), it is ubiquitinated through 'Lys-63' linkage of ubiquitin moieties by the E2 ligase ube2n and the E3 ligases rnf8 and rnf168, leading to the recruitment of repair proteins to sites of DNA damage. Ubiquitination at Lys-14 and Lys-16 (H2AK13Ub and H2AK15Ub, respectively) in response to DNA damage is initiated by rnf168 that mediates monoubiquitination at these 2 sites, and 'Lys-63'-linked ubiquitin are then conjugated to monoubiquitin; rnf8 is able to extend 'Lys-63'-linked ubiquitin chains in vitro. H2AK119Ub and ionizing radiation-induced 'Lys-63'-linked ubiquitination (H2AK13Ub and H2AK15Ub) are distinct events.

Its subcellular location is the nucleus. It localises to the chromosome. Its function is as follows. Variant histone H2A which replaces conventional H2A in a subset of nucleosomes. Nucleosomes wrap and compact DNA into chromatin, limiting DNA accessibility to the cellular machineries which require DNA as a template. Histones thereby play a central role in transcription regulation, DNA repair, DNA replication and chromosomal stability. DNA accessibility is regulated via a complex set of post-translational modifications of histones, also called histone code, and nucleosome remodeling. Required for checkpoint-mediated arrest of cell cycle progression in response to low doses of ionizing radiation and for efficient repair of DNA double strand breaks (DSBs) specifically when modified by C-terminal phosphorylation. In Xenopus laevis (African clawed frog), this protein is Histone H2AX (h2ax).